Here is a 365-residue protein sequence, read N- to C-terminus: Chorismate synthase (365 aa).

NADP(+) is bound by residues R48 and R54. Residues 125–127, 238–239, A278, 293–297, and R319 each bind FMN; these read RSS, NA, and KPTSS.

It belongs to the chorismate synthase family. In terms of assembly, homotetramer. The cofactor is FMNH2.

It catalyses the reaction 5-O-(1-carboxyvinyl)-3-phosphoshikimate = chorismate + phosphate. It participates in metabolic intermediate biosynthesis; chorismate biosynthesis; chorismate from D-erythrose 4-phosphate and phosphoenolpyruvate: step 7/7. Catalyzes the anti-1,4-elimination of the C-3 phosphate and the C-6 proR hydrogen from 5-enolpyruvylshikimate-3-phosphate (EPSP) to yield chorismate, which is the branch point compound that serves as the starting substrate for the three terminal pathways of aromatic amino acid biosynthesis. This reaction introduces a second double bond into the aromatic ring system. The sequence is that of Chorismate synthase from Pseudoalteromonas translucida (strain TAC 125).